The chain runs to 80 residues: Omega-conotoxin-like PuIA (80 aa).

An N-terminal signal peptide occupies residues 1–22; the sequence is MKLTCVMIVAVLFLTAWTFVTA. The propeptide occupies 23-50; it reads DSIRALEDLFAKAPDEMENSGASPLNER. 3 disulfides stabilise this stretch: C52–C70, C59–C74, and C69–C78.

It belongs to the conotoxin O1 superfamily. As to expression, expressed by the venom duct.

Its subcellular location is the secreted. Functionally, omega-conotoxins act at presynaptic membranes, they bind and block voltage-gated calcium channels (Cav). The protein is Omega-conotoxin-like PuIA of Conus pulicarius (Flea-bitten cone).